A 298-amino-acid polypeptide reads, in one-letter code: Inosose dehydratase (298 aa).

It belongs to the IolE/MocC family. Requires glutathione as cofactor. It depends on Co(2+) as a cofactor. The cofactor is Mn(2+).

The catalysed reaction is scyllo-inosose = 3D-3,5/4-trihydroxycyclohexane-1,2-dione + H2O. The protein operates within polyol metabolism; myo-inositol degradation into acetyl-CoA; acetyl-CoA from myo-inositol: step 2/7. Catalyzes the dehydration of inosose (2-keto-myo-inositol, 2KMI or 2,4,6/3,5-pentahydroxycyclohexanone) to 3D-(3,5/4)-trihydroxycyclohexane-1,2-dione (D-2,3-diketo-4-deoxy-epi-inositol). This chain is Inosose dehydratase, found in Lacticaseibacillus casei (Lactobacillus casei).